Consider the following 177-residue polypeptide: Nucleoside triphosphate/diphosphate phosphatase (177 aa).

The active-site Proton donor is Arg23. Mg(2+)-binding residues include Asn87, Asp103, Asp105, Asp107, Asp120, and Glu123.

Belongs to the Ntdp family. Mg(2+) is required as a cofactor.

It carries out the reaction a ribonucleoside 5'-triphosphate + H2O = a ribonucleoside 5'-diphosphate + phosphate + H(+). The enzyme catalyses a ribonucleoside 5'-diphosphate + H2O = a ribonucleoside 5'-phosphate + phosphate + H(+). Functionally, has nucleoside phosphatase activity towards nucleoside triphosphates and nucleoside diphosphates. The polypeptide is Nucleoside triphosphate/diphosphate phosphatase (Streptococcus mutans serotype c (strain ATCC 700610 / UA159)).